A 745-amino-acid chain; its full sequence is Protein transport protein SEC23 D (745 aa).

Zn(2+) contacts are provided by cysteine 53, cysteine 56, cysteine 73, and cysteine 76. Residues cysteine 53–cysteine 76 form a zinc finger-like region.

It belongs to the SEC23/SEC24 family. SEC24 subfamily. Component of the coat protein complex II (COPII), composed of at least five proteins: the Sec23/24 complex, the Sec13/31 complex and Sar1. As to expression, mostly expressed in closed floral bud, pollen and flowers, and, to a lower extent, in mature siliques, roots and leaf primordia.

The protein resides in the cytoplasmic vesicle. The protein localises to the COPII-coated vesicle membrane. Its subcellular location is the endoplasmic reticulum membrane. It is found in the membrane. In terms of biological role, component of the coat protein complex II (COPII) which promotes the formation of transport vesicles from the endoplasmic reticulum (ER). The coat has two main functions, the physical deformation of the endoplasmic reticulum membrane into vesicles and the selection of cargo molecules. May contribute to COPII-coated vesicles formation and ER-Golgi vesicle transport. Together with SEC23A, essential for pollen wall development and exine patterning, probably by regulating endoplasmic reticulum (ER) export of lipids and proteins (e.g. sporopollenin) necessary for pollen wall formation. Also involved in plastid physiology in anther tapetal cells. This Arabidopsis thaliana (Mouse-ear cress) protein is Protein transport protein SEC23 D.